The following is a 117-amino-acid chain: Large ribosomal subunit protein bL20 (117 aa).

This sequence belongs to the bacterial ribosomal protein bL20 family.

Its function is as follows. Binds directly to 23S ribosomal RNA and is necessary for the in vitro assembly process of the 50S ribosomal subunit. It is not involved in the protein synthesizing functions of that subunit. This chain is Large ribosomal subunit protein bL20, found in Mannheimia succiniciproducens (strain KCTC 0769BP / MBEL55E).